The chain runs to 258 residues: Mediator of RNA polymerase II transcription subunit 18 (258 aa).

This sequence belongs to the Mediator complex subunit 18 family. Component of the Mediator complex.

The protein localises to the nucleus. Its function is as follows. Component of the Mediator complex, a coactivator involved in the regulated transcription of nearly all RNA polymerase II-dependent genes. Mediator functions as a bridge to convey information from gene-specific regulatory proteins to the basal RNA polymerase II transcription machinery. Mediator is recruited to promoters by direct interactions with regulatory proteins and serves as a scaffold for the assembly of a functional preinitiation complex with RNA polymerase II and the general transcription factors. The polypeptide is Mediator of RNA polymerase II transcription subunit 18 (SRB5) (Eremothecium gossypii (strain ATCC 10895 / CBS 109.51 / FGSC 9923 / NRRL Y-1056) (Yeast)).